A 159-amino-acid chain; its full sequence is Succinate dehydrogenase [ubiquinone] cytochrome b small subunit, mitochondrial (159 aa).

The transit peptide at 1–30 directs the protein to the mitochondrion; sequence MLQTRLGLGALRQGRLLFAVKSFSTTSVAK. The Mitochondrial matrix segment spans residues 31–65; that stretch reads IFPPPPQTIKGTVNDAAVFPHHSKLHGSYHWDFER. The chain crosses the membrane as a helical span at residues 66-82; the sequence is IIAIAMVPQVMIPLFTG. At 83-89 the chain is on the mitochondrial intermembrane side; it reads TSHPLMD. The chain crosses the membrane as a helical span at residues 90 to 109; it reads AALACTLITHAHLGFESCVI. Residue His-99 coordinates heme. Residues 110–122 lie on the Mitochondrial matrix side of the membrane; that stretch reads DYFPARRFKKLSP. Tyr-111 serves as a coordination point for a ubiquinone. Residues 123–140 form a helical membrane-spanning segment; the sequence is LMHWILRGCTVLTLIGVY. The Mitochondrial intermembrane portion of the chain corresponds to 141 to 159; it reads EFNTNDIGLTEGIKKLWKS.

Belongs to the CybS family. In terms of assembly, forms part of complex II containing four subunits: a flavoprotein (FP), an iron-sulfur protein (IP) and a cytochrome b composed of a large and a small subunit.

The protein resides in the mitochondrion inner membrane. The protein operates within carbohydrate metabolism; tricarboxylic acid cycle. Membrane-anchoring subunit of succinate dehydrogenase (SDH) that is involved in complex II of the mitochondrial electron transport chain and is responsible for transferring electrons from succinate to ubiquinone (coenzyme Q). The sequence is that of Succinate dehydrogenase [ubiquinone] cytochrome b small subunit, mitochondrial (sdh4) from Schizosaccharomyces pombe (strain 972 / ATCC 24843) (Fission yeast).